We begin with the raw amino-acid sequence, 1383 residues long: DNA-directed RNA polymerase subunit beta (1383 aa).

The protein belongs to the RNA polymerase beta chain family. The RNAP catalytic core consists of 2 alpha, 1 beta, 1 beta' and 1 omega subunit. When a sigma factor is associated with the core the holoenzyme is formed, which can initiate transcription.

The catalysed reaction is RNA(n) + a ribonucleoside 5'-triphosphate = RNA(n+1) + diphosphate. Functionally, DNA-dependent RNA polymerase catalyzes the transcription of DNA into RNA using the four ribonucleoside triphosphates as substrates. The chain is DNA-directed RNA polymerase subunit beta from Bartonella tribocorum (strain CIP 105476 / IBS 506).